The sequence spans 970 residues: Glycine dehydrogenase (decarboxylating) (970 aa).

Position 723 is an N6-(pyridoxal phosphate)lysine (Lys-723).

This sequence belongs to the GcvP family. As to quaternary structure, the glycine cleavage system is composed of four proteins: P, T, L and H. Pyridoxal 5'-phosphate is required as a cofactor.

It carries out the reaction N(6)-[(R)-lipoyl]-L-lysyl-[glycine-cleavage complex H protein] + glycine + H(+) = N(6)-[(R)-S(8)-aminomethyldihydrolipoyl]-L-lysyl-[glycine-cleavage complex H protein] + CO2. In terms of biological role, the glycine cleavage system catalyzes the degradation of glycine. The P protein binds the alpha-amino group of glycine through its pyridoxal phosphate cofactor; CO(2) is released and the remaining methylamine moiety is then transferred to the lipoamide cofactor of the H protein. This is Glycine dehydrogenase (decarboxylating) from Burkholderia pseudomallei (strain 1106a).